The chain runs to 543 residues: Protein MGF 505-10R (543 aa).

Belongs to the asfivirus MGF 505 family.

Functionally, plays a role in virus cell tropism, and may be required for efficient virus replication in macrophages. In African swine fever virus (isolate Tick/South Africa/Pretoriuskop Pr4/1996) (ASFV), this protein is Protein MGF 505-10R.